The chain runs to 245 residues: Ribosomal RNA large subunit methyltransferase E (245 aa).

The interval 1–25 (MTKSPIGGNRSGRKLGQKVKKGKLK) is disordered. Basic residues predominate over residues 11–25 (SGRKLGQKVKKGKLK). Residues glycine 81, tryptophan 83, aspartate 104, aspartate 120, and aspartate 144 each contribute to the S-adenosyl-L-methionine site. Lysine 184 serves as the catalytic Proton acceptor.

It belongs to the class I-like SAM-binding methyltransferase superfamily. RNA methyltransferase RlmE family.

The protein localises to the cytoplasm. It catalyses the reaction uridine(2552) in 23S rRNA + S-adenosyl-L-methionine = 2'-O-methyluridine(2552) in 23S rRNA + S-adenosyl-L-homocysteine + H(+). Its function is as follows. Specifically methylates the uridine in position 2552 of 23S rRNA at the 2'-O position of the ribose in the fully assembled 50S ribosomal subunit. This is Ribosomal RNA large subunit methyltransferase E from Sinorhizobium fredii (strain NBRC 101917 / NGR234).